A 414-amino-acid chain; its full sequence is Esterase FrsA (414 aa).

Belongs to the FrsA family.

It catalyses the reaction a carboxylic ester + H2O = an alcohol + a carboxylate + H(+). In terms of biological role, catalyzes the hydrolysis of esters. The sequence is that of Esterase FrsA from Salmonella typhi.